Here is a 201-residue protein sequence, read N- to C-terminus: UPF0301 protein RER_60040 (201 aa).

Belongs to the UPF0301 (AlgH) family.

The sequence is that of UPF0301 protein RER_60040 from Rhodococcus erythropolis (strain PR4 / NBRC 100887).